Consider the following 369-residue polypeptide: 3-dehydroquinate synthase (369 aa).

Residues 70 to 75 (DAEDGK), 104 to 108 (GAATD), 128 to 129 (TT), K141, K150, and 168 to 171 (TLET) contribute to the NAD(+) site. E183, H246, and H262 together coordinate Zn(2+).

The protein belongs to the sugar phosphate cyclases superfamily. Dehydroquinate synthase family. Co(2+) serves as cofactor. It depends on Zn(2+) as a cofactor. The cofactor is NAD(+).

Its subcellular location is the cytoplasm. It carries out the reaction 7-phospho-2-dehydro-3-deoxy-D-arabino-heptonate = 3-dehydroquinate + phosphate. Its pathway is metabolic intermediate biosynthesis; chorismate biosynthesis; chorismate from D-erythrose 4-phosphate and phosphoenolpyruvate: step 2/7. In terms of biological role, catalyzes the conversion of 3-deoxy-D-arabino-heptulosonate 7-phosphate (DAHP) to dehydroquinate (DHQ). The protein is 3-dehydroquinate synthase of Rhodococcus erythropolis (strain PR4 / NBRC 100887).